Here is a 48-residue protein sequence, read N- to C-terminus: MRVKITLICSSCGNKNYISSKNKATHPEKVETMKFCPKERIVTLHREG.

It belongs to the bacterial ribosomal protein bL33 family.

The chain is Large ribosomal subunit protein bL33B from Lactococcus lactis subsp. cremoris (strain MG1363).